A 455-amino-acid chain; its full sequence is Phosphoglucosamine mutase (455 aa).

S102 serves as the catalytic Phosphoserine intermediate. Mg(2+) contacts are provided by S102, D241, D243, and D245. A Phosphoserine modification is found at S102.

Belongs to the phosphohexose mutase family. Mg(2+) is required as a cofactor. In terms of processing, activated by phosphorylation.

The catalysed reaction is alpha-D-glucosamine 1-phosphate = D-glucosamine 6-phosphate. Its function is as follows. Catalyzes the conversion of glucosamine-6-phosphate to glucosamine-1-phosphate. The polypeptide is Phosphoglucosamine mutase (Legionella pneumophila (strain Corby)).